The following is a 122-amino-acid chain: Fluoride-specific ion channel FluC (122 aa).

Transmembrane regions (helical) follow at residues 1 to 21 (MIGTILAVGFGGFLGAISRML), 34 to 54 (FPYGTLLVNIIGSFLMGLFFS), 60 to 80 (GVHIFTKSLISTGFLSAFTTF), and 100 to 120 (FLNIILNVILCLLAVWIGFLI).

It belongs to the fluoride channel Fluc/FEX (TC 1.A.43) family.

It is found in the cell inner membrane. The catalysed reaction is fluoride(in) = fluoride(out). In terms of biological role, fluoride-specific ion channel. Important for reducing fluoride concentration in the cell, thus reducing its toxicity. This Campylobacter lari (strain RM2100 / D67 / ATCC BAA-1060) protein is Fluoride-specific ion channel FluC.